The primary structure comprises 390 residues: Dihydroorotase (390 aa).

Zn(2+) is bound by residues histidine 54 and histidine 56. Residues 56-58 (HIR) and asparagine 88 contribute to the substrate site. Residues lysine 136, histidine 160, histidine 197, and aspartate 259 each coordinate Zn(2+). Lysine 136 bears the N6-carboxylysine mark. The active site involves aspartate 259. Residues histidine 263 and 277 to 278 (PG) each bind substrate.

This sequence belongs to the metallo-dependent hydrolases superfamily. DHOase family. Class I DHOase subfamily. The cofactor is Zn(2+).

It carries out the reaction (S)-dihydroorotate + H2O = N-carbamoyl-L-aspartate + H(+). The protein operates within pyrimidine metabolism; UMP biosynthesis via de novo pathway; (S)-dihydroorotate from bicarbonate: step 3/3. Functionally, catalyzes the reversible cyclization of carbamoyl aspartate to dihydroorotate. This chain is Dihydroorotase, found in Saccharolobus solfataricus (strain ATCC 35092 / DSM 1617 / JCM 11322 / P2) (Sulfolobus solfataricus).